The following is a 295-amino-acid chain: Glycine N-methyltransferase (295 aa).

Val-2 is subject to N-acetylvaline. The (6S)-5-methyl-5,6,7,8-tetrahydrofolate site is built by Ser-4 and Tyr-6. Residue Ser-10 is modified to Phosphoserine. Tyr-22, Trp-31, Tyr-34, and Arg-41 together coordinate S-adenosyl-L-methionine. Tyr-34 carries the phosphotyrosine modification. An N6-succinyllysine modification is found at Lys-46. S-adenosyl-L-methionine-binding positions include Ala-65, 86-88 (DAS), 117-118 (NW), 139-142 (LGNS), and Arg-178. N6-succinyllysine is present on residues Lys-193, Lys-198, and Lys-203. Residue His-217 participates in (6S)-5-methyl-5,6,7,8-tetrahydrofolate binding. S-adenosyl-L-methionine is bound at residue Tyr-223. Arg-242 is a (6S)-5-methyl-5,6,7,8-tetrahydrofolate binding site.

Belongs to the class I-like SAM-binding methyltransferase superfamily. Glycine N-methyltransferase family. As to quaternary structure, homotetramer. In terms of tissue distribution, expressed only in liver, pancreas, and prostate.

The protein localises to the cytoplasm. The enzyme catalyses glycine + S-adenosyl-L-methionine = sarcosine + S-adenosyl-L-homocysteine + H(+). Its activity is regulated as follows. Inhibited by 5-methyltetrahydrofolate monoglutamate and by 5-methyltetrahydrofolate pentaglutamate, inhibition is much more effective by the pentaglutamate form than by the monoglutamate form. Two molecules of 5-methyltetrahydrofolate are bound per tetramer. The binding sites are localized between subunits. Inhibitor binding may preclude movements of the polypeptide chain that are necessary for enzyme activity. Catalyzes the methylation of glycine by using S-adenosylmethionine (AdoMet) to form N-methylglycine (sarcosine) with the concomitant production of S-adenosylhomocysteine (AdoHcy), a reaction regulated by the binding of 5-methyltetrahydrofolate. Plays an important role in the regulation of methyl group metabolism by regulating the ratio between S-adenosyl-L-methionine and S-adenosyl-L-homocysteine. The sequence is that of Glycine N-methyltransferase from Homo sapiens (Human).